The following is a 559-amino-acid chain: 3-phosphoinositide-dependent protein kinase 1 (559 aa).

A Phosphotyrosine; by SRC and INSR modification is found at tyrosine 9. Serine 25 carries the post-translational modification Phosphoserine. The interval serine 25–glutamate 83 is disordered. The span at proline 35–glycine 44 shows a compositional bias: low complexity. Polar residues predominate over residues valine 45–glycine 54. In terms of domain architecture, Protein kinase spans phenylalanine 85–phenylalanine 345. ATP is bound by residues serine 95 to serine 97 and lysine 114. The interval leucine 116–phenylalanine 160 is PIF-pocket. ATP is bound by residues serine 163 to alanine 165 and glutamate 169. The active-site Proton acceptor is aspartate 208. ATP is bound by residues glutamate 212 and aspartate 226. Serine 244 bears the Phosphoserine mark. At lysine 307 the chain carries N6-acetyllysine. A Phosphothreonine; by MELK modification is found at threonine 357. Phosphotyrosine; by SRC and INSR occurs at positions 376 and 379. Position 396 is a phosphoserine (serine 396). Position 397 is a phosphoserine; by MAP3K5 (serine 397). The residue at position 399 (serine 399) is a Phosphoserine. The residue at position 401 (serine 401) is a Phosphoserine; by MAP3K5. The residue at position 413 (serine 413) is a Phosphoserine. The 92-residue stretch at lysine 462 to asparagine 553 folds into the PH domain. The residue at position 504 (serine 504) is a Phosphoserine; by PKC/PRKCQ. Threonine 516 carries the post-translational modification Phosphothreonine; by autocatalysis. Phosphoserine; by PKC/PRKCQ is present on serine 532.

It belongs to the protein kinase superfamily. AGC Ser/Thr protein kinase family. PDPK1 subfamily. Homodimer in its autoinhibited state. Active as monomer. Interacts with NPRL2, PAK1, PTK2B, GRB14, STRAP and IKKB. The Tyr-9 phosphorylated form interacts with SRC, RASA1 and CRK (via their SH2 domains). Interacts with SGK3 in a phosphorylation-dependent manner. The tyrosine-phosphorylated form interacts with PTPN6. The Ser-244 phosphorylated form interacts with YWHAH and YWHAQ. Binds INSR in response to insulin. Interacts (via PH domain) with SMAD3, SMAD4 and SMAD7. Interacts with PKN2; the interaction stimulates PDPK1 autophosphorylation, its PI(3,4,5)P3-dependent kinase activity toward 'Ser-473' of AKT1 but also activates its kinase activity toward PRKCD and PRKCZ. Interacts with PKN1 (via C-terminus) and PPARG. Phosphorylation on Ser-244 in the activation loop is required for full activity. PDPK1 itself can autophosphorylate Ser-244, leading to its own activation. Autophosphorylation is inhibited by the apoptotic C-terminus cleavage product of PKN2. Tyr-9 phosphorylation is critical for stabilization of both PDPK1 and the PDPK1/SRC complex via HSP90-mediated protection of PDPK1 degradation. Angiotensin II stimulates the tyrosine phosphorylation of PDPK1 in vascular smooth muscle in a calcium- and SRC-dependent manner. Phosphorylated on Tyr-9, Tyr-376 and Tyr-379 by INSR in response to insulin. Palmitate negatively regulates autophosphorylation at Ser-244 and palmitate-induced phosphorylation at Ser-532 and Ser-504 by PKC/PRKCQ negatively regulates its ability to phosphorylate PKB/AKT1. Phosphorylation at Thr-357 by MELK partially inhibits kinase activity, the inhibition is cooperatively enhanced by phosphorylation at Ser-397 and Ser-401 by MAP3K5. Post-translationally, monoubiquitinated in the kinase domain, deubiquitinated by USP4. As to expression, highly expressed in heart, brain, liver and testis, also expressed in embryonic cells.

It is found in the cytoplasm. The protein localises to the nucleus. Its subcellular location is the cell membrane. The protein resides in the cell junction. It localises to the focal adhesion. It carries out the reaction L-seryl-[protein] + ATP = O-phospho-L-seryl-[protein] + ADP + H(+). It catalyses the reaction L-threonyl-[protein] + ATP = O-phospho-L-threonyl-[protein] + ADP + H(+). Homodimerization regulates its activity by maintaining the kinase in an autoinhibitory conformation. NPRL2 down-regulates its activity by interfering with tyrosine phosphorylation at the Tyr-9, Tyr-376 and Tyr-379 residues. The 14-3-3 protein YWHAQ acts as a negative regulator by association with the residues surrounding the Ser-244 residue. STRAP positively regulates its activity by enhancing its autophosphorylation and by stimulating its dissociation from YWHAQ. SMAD2, SMAD3, SMAD4 and SMAD7 also positively regulate its activity by stimulating its dissociation from YWHAQ. Activated by phosphorylation on Tyr-9, Tyr-376 and Tyr-379 by INSR in response to insulin. In terms of biological role, serine/threonine kinase which acts as a master kinase, phosphorylating and activating a subgroup of the AGC family of protein kinases. Its targets include: protein kinase B (PKB/AKT1, PKB/AKT2, PKB/AKT3), p70 ribosomal protein S6 kinase (RPS6KB1), p90 ribosomal protein S6 kinase (RPS6KA1, RPS6KA2 and RPS6KA3), cyclic AMP-dependent protein kinase (PRKACA), protein kinase C (PRKCD and PRKCZ), serum and glucocorticoid-inducible kinase (SGK1, SGK2 and SGK3), p21-activated kinase-1 (PAK1), TSSK3, protein kinase PKN (PKN1 and PKN2). Plays a central role in the transduction of signals from insulin by providing the activating phosphorylation to PKB/AKT1, thus propagating the signal to downstream targets controlling cell proliferation and survival, as well as glucose and amino acid uptake and storage. Negatively regulates the TGF-beta-induced signaling by: modulating the association of SMAD3 and SMAD7 with TGF-beta receptor, phosphorylating SMAD2, SMAD3, SMAD4 and SMAD7, preventing the nuclear translocation of SMAD3 and SMAD4 and the translocation of SMAD7 from the nucleus to the cytoplasm in response to TGF-beta. Activates PPARG transcriptional activity and promotes adipocyte differentiation. Activates the NF-kappa-B pathway via phosphorylation of IKKB. The tyrosine phosphorylated form is crucial for the regulation of focal adhesions by angiotensin II. Controls proliferation, survival, and growth of developing pancreatic cells. Participates in the regulation of Ca(2+) entry and Ca(2+)-activated K(+) channels of mast cells. Essential for the motility of vascular endothelial cells (ECs) and is involved in the regulation of their chemotaxis. Plays a critical role in cardiac homeostasis by serving as a dual effector for cell survival and beta-adrenergic response. Plays an important role during thymocyte development by regulating the expression of key nutrient receptors on the surface of pre-T cells and mediating Notch-induced cell growth and proliferative responses. Provides negative feedback inhibition to toll-like receptor-mediated NF-kappa-B activation in macrophages. This is 3-phosphoinositide-dependent protein kinase 1 (Pdpk1) from Mus musculus (Mouse).